The chain runs to 58 residues: Small ribosomal subunit protein bS21 (58 aa).

A disordered region spans residues Asp39–Arg58. Positions Val43–Arg58 are enriched in basic residues.

Belongs to the bacterial ribosomal protein bS21 family.

This Chlamydia abortus (strain DSM 27085 / S26/3) (Chlamydophila abortus) protein is Small ribosomal subunit protein bS21.